The sequence spans 371 residues: Cathepsin W (371 aa).

Positions 1-21 are cleaved as a signal peptide; it reads MTLTAHLSYFLVLLLAGQGLS. Positions 22 to 125 are excised as a propeptide; the sequence is DSLLTKDAGP…KVESNTWGES (104 aa). N-linked (GlcNAc...) asparagine glycosylation is found at Asn48 and Asn112. Cystine bridges form between Cys148–Cys189, Cys182–Cys224, and Cys282–Cys347. Cys151 is a catalytic residue. Residue Asn203 is glycosylated (N-linked (GlcNAc...) asparagine). Catalysis depends on residues His289 and Asn326. Asn344 carries an N-linked (GlcNAc...) asparagine glycan.

This sequence belongs to the peptidase C1 family.

The protein localises to the endoplasmic reticulum. In terms of biological role, may have a specific function in the mechanism or regulation of T-cell cytolytic activity. The sequence is that of Cathepsin W (Ctsw) from Mus musculus (Mouse).